Reading from the N-terminus, the 422-residue chain is Dihydroorotase (422 aa).

Zn(2+) contacts are provided by H57 and H59. Substrate contacts are provided by residues 59–61 and N91; that span reads HLR. Residues D149, H176, and H229 each contribute to the Zn(2+) site. A substrate-binding site is contributed by N275. D302 contacts Zn(2+). Residue D302 is part of the active site. Residues H306 and 320–321 each bind substrate; that span reads FG.

The protein belongs to the metallo-dependent hydrolases superfamily. DHOase family. Class I DHOase subfamily. Requires Zn(2+) as cofactor.

The catalysed reaction is (S)-dihydroorotate + H2O = N-carbamoyl-L-aspartate + H(+). It functions in the pathway pyrimidine metabolism; UMP biosynthesis via de novo pathway; (S)-dihydroorotate from bicarbonate: step 3/3. Its function is as follows. Catalyzes the reversible cyclization of carbamoyl aspartate to dihydroorotate. The protein is Dihydroorotase of Endomicrobium trichonymphae.